The chain runs to 222 residues: Deoxyribose-phosphate aldolase (222 aa).

Residue Asp92 is the Proton donor/acceptor of the active site. Lys156 (schiff-base intermediate with acetaldehyde) is an active-site residue. Catalysis depends on Lys185, which acts as the Proton donor/acceptor.

This sequence belongs to the DeoC/FbaB aldolase family. DeoC type 1 subfamily. In terms of assembly, homodimer.

It localises to the cytoplasm. It catalyses the reaction 2-deoxy-D-ribose 5-phosphate = D-glyceraldehyde 3-phosphate + acetaldehyde. It participates in carbohydrate degradation; 2-deoxy-D-ribose 1-phosphate degradation; D-glyceraldehyde 3-phosphate and acetaldehyde from 2-deoxy-alpha-D-ribose 1-phosphate: step 2/2. Its activity is regulated as follows. Shows high stability to high concentrations of acetaldehyde. Its function is as follows. Catalyzes a reversible aldol reaction between acetaldehyde and D-glyceraldehyde 3-phosphate to generate 2-deoxy-D-ribose 5-phosphate. The sequence is that of Deoxyribose-phosphate aldolase from Aciduliprofundum boonei (strain DSM 19572 / T469).